The sequence spans 609 residues: Carotenoid cleavage dioxygenase 7, chloroplastic (609 aa).

A chloroplast-targeting transit peptide spans 1–34 (MATQAIAPMHAAVVHRHHVLPPRRCVRRRGVFVR). Positions 263, 316, 394, and 603 each coordinate Fe cation.

It belongs to the carotenoid oxygenase family. Fe(2+) serves as cofactor. As to expression, expressed in vascular bundles of roots, leaves, stems and panicles.

The protein localises to the plastid. Its subcellular location is the chloroplast. It carries out the reaction 9-cis-beta-carotene + O2 = 9-cis-10'-apo-beta-carotenal + beta-ionone. Involved in strigolactones biosynthesis by cleaving asymmetrically a variety of linear and cyclic carotenoids at the 9-10 double bond. Produces one C(13) beta-ionone and the C(27) 10'-apo-beta-carotenal. Strigolactones are hormones that inhibit tillering and shoot branching through the MAX-dependent pathway, contribute to the regulation of shoot architectural response to phosphate-limiting conditions and function as rhizosphere signal that stimulates hyphal branching of arbuscular mycorrhizal fungi and trigger seed germination of root parasitic weeds. Can rescue the phenotype in the Arabidopsis max3 mutant. This is Carotenoid cleavage dioxygenase 7, chloroplastic (CCD7) from Oryza sativa subsp. japonica (Rice).